Reading from the N-terminus, the 461-residue chain is Fumarate hydratase class II (461 aa).

Residues 97 to 99 (SGT), 127 to 130 (HPND), 137 to 139 (SSN), and threonine 185 contribute to the substrate site. Residue histidine 186 is the Proton donor/acceptor of the active site. Serine 316 is an active-site residue. Substrate-binding positions include serine 317 and 322-324 (KVN).

It belongs to the class-II fumarase/aspartase family. Fumarase subfamily. In terms of assembly, homotetramer.

It localises to the cytoplasm. It catalyses the reaction (S)-malate = fumarate + H2O. Its pathway is carbohydrate metabolism; tricarboxylic acid cycle; (S)-malate from fumarate: step 1/1. Functionally, involved in the TCA cycle. Catalyzes the stereospecific interconversion of fumarate to L-malate. The protein is Fumarate hydratase class II of Staphylococcus aureus (strain MRSA252).